Consider the following 571-residue polypeptide: Proline--tRNA ligase (571 aa).

The protein belongs to the class-II aminoacyl-tRNA synthetase family. ProS type 1 subfamily. Homodimer.

Its subcellular location is the cytoplasm. The catalysed reaction is tRNA(Pro) + L-proline + ATP = L-prolyl-tRNA(Pro) + AMP + diphosphate. In terms of biological role, catalyzes the attachment of proline to tRNA(Pro) in a two-step reaction: proline is first activated by ATP to form Pro-AMP and then transferred to the acceptor end of tRNA(Pro). As ProRS can inadvertently accommodate and process non-cognate amino acids such as alanine and cysteine, to avoid such errors it has two additional distinct editing activities against alanine. One activity is designated as 'pretransfer' editing and involves the tRNA(Pro)-independent hydrolysis of activated Ala-AMP. The other activity is designated 'posttransfer' editing and involves deacylation of mischarged Ala-tRNA(Pro). The misacylated Cys-tRNA(Pro) is not edited by ProRS. This is Proline--tRNA ligase from Pseudoalteromonas atlantica (strain T6c / ATCC BAA-1087).